The chain runs to 513 residues: 2-isopropylmalate synthase (513 aa).

A Pyruvate carboxyltransferase domain is found at 5–268 (LIIFDTTLRD…EVGIDTTQIV (264 aa)). Asp14, His202, His204, and Asn239 together coordinate Mn(2+). Residues 394–513 (RLLSLEQQSA…SKNERVAAQG (120 aa)) form a regulatory domain region.

Belongs to the alpha-IPM synthase/homocitrate synthase family. LeuA type 1 subfamily. Homodimer. The cofactor is Mn(2+).

The protein localises to the cytoplasm. It catalyses the reaction 3-methyl-2-oxobutanoate + acetyl-CoA + H2O = (2S)-2-isopropylmalate + CoA + H(+). Its pathway is amino-acid biosynthesis; L-leucine biosynthesis; L-leucine from 3-methyl-2-oxobutanoate: step 1/4. Its function is as follows. Catalyzes the condensation of the acetyl group of acetyl-CoA with 3-methyl-2-oxobutanoate (2-ketoisovalerate) to form 3-carboxy-3-hydroxy-4-methylpentanoate (2-isopropylmalate). The chain is 2-isopropylmalate synthase from Methylibium petroleiphilum (strain ATCC BAA-1232 / LMG 22953 / PM1).